The following is a 511-amino-acid chain: Limonoid UDP-glucosyltransferase (511 aa).

Catalysis depends on His19, which acts as the Proton acceptor. Residue His19 coordinates an anthocyanidin. Positions 344, 359, 362, 363, 364, and 367 each coordinate UDP-alpha-D-glucose. Gly382 serves as a coordination point for an anthocyanidin. Residues Asp383 and Gln384 each coordinate UDP-alpha-D-glucose.

Belongs to the UDP-glycosyltransferase family.

The catalysed reaction is limonin + UDP-alpha-D-glucose + H2O = limonin 17-beta-D-glucoside + UDP + 2 H(+). Functionally, involved in the glucosylation of limonoids. The sequence is that of Limonoid UDP-glucosyltransferase from Citrus unshiu (Satsuma mandarin).